The chain runs to 180 residues: Adenosine 5'-phosphosulfate reductase (180 aa).

The [4Fe-4S] cluster site is built by cysteine 57, cysteine 58, cysteine 140, and cysteine 143. Cysteine 168 serves as the catalytic Nucleophile; cysteine thiosulfonate intermediate.

Belongs to the PAPS reductase family. CysH subfamily. [4Fe-4S] cluster serves as cofactor.

Its subcellular location is the cytoplasm. It catalyses the reaction [thioredoxin]-disulfide + sulfite + AMP + 2 H(+) = adenosine 5'-phosphosulfate + [thioredoxin]-dithiol. The protein operates within sulfur metabolism; hydrogen sulfide biosynthesis; sulfite from sulfate. Functionally, catalyzes the formation of sulfite from adenosine 5'-phosphosulfate (APS) using thioredoxin as an electron donor. This chain is Adenosine 5'-phosphosulfate reductase, found in Rhizobium tropici.